The sequence spans 217 residues: D-methionine transport system permease protein MetI (217 aa).

Topologically, residues 1–19 (MSEPMMWLLVRGVWETLAM) are periplasmic. Residues 13 to 204 (VWETLAMTFV…LLVILVYLIQ (192 aa)) form the ABC transmembrane type-1 domain. The chain crosses the membrane as a helical span at residues 20-40 (TFVSGFFGFVVGLPVGVLLYV). The Cytoplasmic portion of the chain corresponds to 41–57 (TRPGQIIANAKLYRTVS). The chain crosses the membrane as a helical span at residues 58 to 78 (AIVNIFRSIPFIILLVWMIPF). The Periplasmic segment spans residues 79–80 (TR). Residues 81–101 (VIVGTSIGLQAAIVPLTVGAA) traverse the membrane as a helical segment. The Cytoplasmic portion of the chain corresponds to 102–151 (PFIARMVENALLEIPTGLIEASRAMGATPMQIVRKVLLPEALPGLVNAAT). A helical transmembrane segment spans residues 152-172 (ITLITLVGYSAMGGAVGAGGL). At 173-185 (GQIGYQYGYIGYN) the chain is on the periplasmic side. A helical transmembrane segment spans residues 186–206 (ATVMNTVLVLLVILVYLIQFA). Residues 207–217 (GDRIVRAVTRK) lie on the Cytoplasmic side of the membrane.

It belongs to the binding-protein-dependent transport system permease family. CysTW subfamily.

The protein localises to the cell inner membrane. In terms of biological role, part of the binding-protein-dependent transport system for D-methionine and the toxic methionine analog alpha-methyl-methionine. Probably responsible for the translocation of the substrate across the membrane. In Escherichia coli O157:H7, this protein is D-methionine transport system permease protein MetI (metI).